Reading from the N-terminus, the 202-residue chain is PITH domain-containing protein 1 (202 aa).

Positions 11-184 (SHGVDDGIEY…IVNTVYESKP (174 aa)) constitute a PITH domain.

The protein belongs to the PITHD1 family.

In Dictyostelium discoideum (Social amoeba), this protein is PITH domain-containing protein 1.